A 699-amino-acid polypeptide reads, in one-letter code: Elongation factor G (699 aa).

In terms of domain architecture, tr-type G spans 8 to 283; that stretch reads EHIRNIGICA…AVVDFLPSPI (276 aa). GTP-binding positions include 17 to 24, 81 to 85, and 135 to 138; these read AHIDAGKT, DTPGH, and NKMD.

This sequence belongs to the TRAFAC class translation factor GTPase superfamily. Classic translation factor GTPase family. EF-G/EF-2 subfamily.

The protein resides in the cytoplasm. Its function is as follows. Catalyzes the GTP-dependent ribosomal translocation step during translation elongation. During this step, the ribosome changes from the pre-translocational (PRE) to the post-translocational (POST) state as the newly formed A-site-bound peptidyl-tRNA and P-site-bound deacylated tRNA move to the P and E sites, respectively. Catalyzes the coordinated movement of the two tRNA molecules, the mRNA and conformational changes in the ribosome. The sequence is that of Elongation factor G from Rickettsia rickettsii.